Here is a 227-residue protein sequence, read N- to C-terminus: UPF0758 protein lpl2409 (227 aa).

The MPN domain maps to 102–225 (RLSNTQQTYA…YSIFAENKWA (124 aa)). Residues H173, H175, and D186 each coordinate Zn(2+). Residues 173 to 186 (HNHPSGLSDASQQD) carry the JAMM motif motif.

The protein belongs to the UPF0758 family.

This chain is UPF0758 protein lpl2409, found in Legionella pneumophila (strain Lens).